A 456-amino-acid polypeptide reads, in one-letter code: NADPH-ferredoxin reductase FprA (456 aa).

FAD contacts are provided by Ser14, Glu40, Leu48, and Val84. NADP(+)-binding positions include Arg110, 155 to 158 (NGNV), 199 to 200 (RR), and Glu211. FAD contacts are provided by residues Trp359 and 366 to 368 (GVI). Gly366 lines the NADP(+) pocket.

The protein belongs to the ferredoxin--NADP reductase type 1 family. As to quaternary structure, monomer. FAD is required as a cofactor.

It carries out the reaction 2 reduced [2Fe-2S]-[ferredoxin] + NADP(+) + H(+) = 2 oxidized [2Fe-2S]-[ferredoxin] + NADPH. Its function is as follows. May serve as electron transfer protein and supply electrons to P450 systems. The chain is NADPH-ferredoxin reductase FprA (fprA) from Mycobacterium tuberculosis (strain CDC 1551 / Oshkosh).